The chain runs to 143 residues: Large-conductance mechanosensitive channel (143 aa).

The next 2 membrane-spanning stretches (helical) occupy residues 10 to 30 and 89 to 109; these read FAVK…GAFS and GSFI…FLMV.

It belongs to the MscL family. As to quaternary structure, homopentamer.

The protein localises to the cell inner membrane. Functionally, channel that opens in response to stretch forces in the membrane lipid bilayer. May participate in the regulation of osmotic pressure changes within the cell. This chain is Large-conductance mechanosensitive channel, found in Burkholderia ambifaria (strain ATCC BAA-244 / DSM 16087 / CCUG 44356 / LMG 19182 / AMMD) (Burkholderia cepacia (strain AMMD)).